Here is a 799-residue protein sequence, read N- to C-terminus: Protein ADP-ribosyltransferase PARP3 (799 aa).

Positions 1 to 49 (MKVESRSHNVHHAHGEEEKVMTRKQKAESKAHEVEHSPKKAKVEDEKNG) are enriched in basic and acidic residues. Residues 1–55 (MKVESRSHNVHHAHGEEEKVMTRKQKAESKAHEVEHSPKKAKVEDEKNGHTNGKS) are disordered. One can recognise a PADR1 zinc-binding domain in the interval 39 to 188 (KKAKVEDEKN…QRDLGLAIKP (150 aa)). The region spanning 71–105 (NEQLSLEQMKEILEANDLDSSGSDLEITRRCQDLL) is the SAP domain. Residues 108-152 (GALEKCMVCNGNMEFDGRRYGCRGFYSEWSSCTFSTREPPRKDEP) are zinc ribbon. The Zn(2+) site is built by Cys-113, Cys-116, Cys-129, and Cys-139. Residues 140 to 161 (TFSTREPPRKDEPIKLPDSVQN) are disordered. Residues 145-154 (EPPRKDEPIK) show a composition bias toward basic and acidic residues. Residues 189–261 (FTGMMISLMG…EPQPLESYDL (73 aa)) form the BRCT domain. One can recognise a WGR domain in the interval 309 to 409 (DGKIFEKDGI…KKFQKKPLKF (101 aa)). Residues 436-555 (HCKLEPMVAN…DITLASHLIG (120 aa)) form the PARP alpha-helical domain. The 232-residue stretch at 564–795 (DPLSDTYKKL…VKYEEKDAVI (232 aa)) folds into the PARP catalytic domain.

The protein belongs to the ARTD/PARP family.

The protein resides in the nucleus. The enzyme catalyses L-aspartyl-[protein] + NAD(+) = 4-O-(ADP-D-ribosyl)-L-aspartyl-[protein] + nicotinamide. It catalyses the reaction L-glutamyl-[protein] + NAD(+) = 5-O-(ADP-D-ribosyl)-L-glutamyl-[protein] + nicotinamide. Involved in the base excision repair (BER) pathway, by catalyzing the poly(ADP-ribosyl)ation of a limited number of acceptor proteins involved in chromatin architecture and in DNA metabolism. This modification follows DNA damages and appears as an obligatory step in a detection/signaling pathway leading to the reparation of DNA strand breaks. The chain is Protein ADP-ribosyltransferase PARP3 (PARP3) from Medicago truncatula (Barrel medic).